Consider the following 79-residue polypeptide: Putative sulfur carrier protein TM_0983 (79 aa).

The active-site Cysteine persulfide intermediate is the Cys-17.

The protein belongs to the sulfur carrier protein TusA family.

The sequence is that of Putative sulfur carrier protein TM_0983 from Thermotoga maritima (strain ATCC 43589 / DSM 3109 / JCM 10099 / NBRC 100826 / MSB8).